Reading from the N-terminus, the 1162-residue chain is Cartilage intermediate layer protein 2 (1162 aa).

A signal peptide spans 1–20; the sequence is MASPLPLLYLCLAALHLAGA. A disordered region spans residues 23 to 51; it reads ATPTEEHTSTARGLQGRPPDTGQPSPALE. Residues 146-197 form the TSP type-1 domain; sequence EAAWGAWGAWGLCSKSCGLGRRLRRRSCQSSSGDTCPGSPQEAQKCVRSRCP. Disulfide bonds link C158–C191, C162–C196, C173–C181, and C314–C360. The region spanning 293-377 is the Ig-like C2-type domain; it reads PYLVKHPESR…TVRSRAALLT (85 aa). N330 is a glycosylation site (N-linked (GlcNAc...) asparagine).

Post-translationally, may be cleaved into 2 chains possibly by a furin-like protease upon or preceding secretion. In terms of processing, N-glycosylated. In terms of tissue distribution, expressed in articulated and meniscal cartilage (at protein level). Also detected in heart, skeletal muscle and brain. Not detected in growth plate cartilage.

It localises to the secreted. The protein resides in the extracellular space. Its subcellular location is the extracellular matrix. Functionally, may play a role in cartilage scaffolding. The chain is Cartilage intermediate layer protein 2 from Mus musculus (Mouse).